A 415-amino-acid chain; its full sequence is Gamma-glutamyl phosphate reductase (415 aa).

This sequence belongs to the gamma-glutamyl phosphate reductase family.

It is found in the cytoplasm. It catalyses the reaction L-glutamate 5-semialdehyde + phosphate + NADP(+) = L-glutamyl 5-phosphate + NADPH + H(+). Its pathway is amino-acid biosynthesis; L-proline biosynthesis; L-glutamate 5-semialdehyde from L-glutamate: step 2/2. In terms of biological role, catalyzes the NADPH-dependent reduction of L-glutamate 5-phosphate into L-glutamate 5-semialdehyde and phosphate. The product spontaneously undergoes cyclization to form 1-pyrroline-5-carboxylate. This Listeria innocua serovar 6a (strain ATCC BAA-680 / CLIP 11262) protein is Gamma-glutamyl phosphate reductase.